Here is a 301-residue protein sequence, read N- to C-terminus: GTPase Era (301 aa).

The 167-residue stretch at 7–173 (KSGFVALLGR…LNTINKYLPE (167 aa)) folds into the Era-type G domain. Positions 15 to 22 (GRPNVGKS) are G1. Residue 15-22 (GRPNVGKS) participates in GTP binding. Residues 41–45 (QTTRN) are G2. The interval 62–65 (DTPG) is G3. GTP-binding positions include 62–66 (DTPGI) and 123–126 (NKVD). Positions 123-126 (NKVD) are G4. Residues 152–154 (ISA) are G5. One can recognise a KH type-2 domain in the interval 204–281 (TSQEVPHATA…NLRLWVKVQH (78 aa)).

The protein belongs to the TRAFAC class TrmE-Era-EngA-EngB-Septin-like GTPase superfamily. Era GTPase family. Monomer.

It localises to the cytoplasm. The protein resides in the cell membrane. Functionally, an essential GTPase that binds both GDP and GTP, with rapid nucleotide exchange. Plays a role in 16S rRNA processing and 30S ribosomal subunit biogenesis and possibly also in cell cycle regulation and energy metabolism. This is GTPase Era from Lactobacillus helveticus (strain DPC 4571).